Consider the following 941-residue polypeptide: PHD finger protein 14 (941 aa).

The segment at 22-295 (DYDSSDDSDF…LSQSKSNEDS (274 aa)) is disordered. Residues serine 26 and serine 29 each carry the phosphoserine modification. Over residues 36–47 (ASDSEGSGNGSE) the composition is skewed to low complexity. Over residues 60-72 (DSEENILEEELNE) the composition is skewed to acidic residues. Composition is skewed to basic and acidic residues over residues 74-85 (IQVKEEQLKNST), 94-109 (QLIK…NGER), and 116-132 (KEKE…EKAT). At serine 84 the chain carries Phosphoserine. The span at 133 to 166 (VSDSAAASAAGTTPATSPPAVTSPSVPTTTTTTT) shows a compositional bias: low complexity. At serine 189 the chain carries Phosphoserine. Acidic residues-rich tracts occupy residues 194–205 (NAMDDYDSEDDN) and 226–249 (DGDN…EGND). A Phosphotyrosine modification is found at tyrosine 199. Serine 201 is modified (phosphoserine). Residue threonine 280 is modified to Phosphothreonine. Residues 281-290 (NDSLTLSQSK) are compositionally biased toward polar residues. Residues serine 283, serine 287, serine 291, serine 295, and serine 301 each carry the phosphoserine modification. The segment at 312-373 (ILICCVCLGD…PWFCDACKCG (62 aa)) adopts a PHD-type 1 zinc-finger fold. Residues cysteine 315, cysteine 318, cysteine 332, cysteine 335, histidine 340, and cysteine 343 each contribute to the Zn(2+) site. Serine 352 carries the post-translational modification Phosphoserine. Residues cysteine 367, cysteine 370, cysteine 378, cysteine 381, histidine 398, cysteine 401, cysteine 434, cysteine 437, cysteine 451, cysteine 456, histidine 461, cysteine 464, cysteine 488, and histidine 491 each contribute to the Zn(2+) site. The C2HC pre-PHD-type zinc finger occupies 375–408 (SPSCELCPNQDGIFKETDAGRWVHIVCALYVPGV). Residues 432–492 (KECSFCEDPR…PFFAYCKQHA (61 aa)) form a PHD-type 2 zinc finger. Residue serine 523 is modified to Phosphoserine. Residues 623-671 (MIQIQENMAEQKNIKDKLENEQEKLHVEYNKLCESLEELQNLNGKLRSE) adopt a coiled-coil conformation. The PHD-type 3 zinc finger occupies 718-772 (LYSCGICKKNHDQHLLLLCDTCKLHYHLGCLDPPLTRMPRKTKNSYWQCSECDQA). 8 residues coordinate Zn(2+): cysteine 721, cysteine 724, cysteine 736, cysteine 739, histidine 744, cysteine 747, cysteine 766, and cysteine 769. Serine 774, serine 775, and serine 828 each carry phosphoserine. The tract at residues 804 to 855 (VPQDVPPEPKKIPIRNTRTRGRKRSFVPEEEKHEERVPRERRQRQSVLQKKP) is disordered. The span at 829-843 (FVPEEEKHEERVPRE) shows a compositional bias: basic and acidic residues. A PHD-type 4 zinc finger spans residues 861-914 (RTECSTCKGTGDNENLVRCDECRLCYHFGCLDPPLKKSPKQTGYGWICQECDSS). Residues cysteine 864, cysteine 867, cysteine 879, cysteine 882, histidine 887, cysteine 890, cysteine 908, and cysteine 911 each contribute to the Zn(2+) site. Residues 912–941 (DSSSSKEDENEAEKKNASQELSMEQKTPKK) form a disordered region. Over residues 915–928 (SSKEDENEAEKKNA) the composition is skewed to basic and acidic residues. The span at 930–941 (QELSMEQKTPKK) shows a compositional bias: polar residues.

As to expression, high levels detected in testis, lung and spleen and low levels in muscle, heart, intestine and kidney (at protein level). Widely expressed in adult with increased levels in intestine, colon and lung.

It localises to the nucleus. The protein localises to the chromosome. The protein resides in the cytoplasm. Histone-binding protein. Binds preferentially to unmodified histone H3 but can also bind to a lesser extent to histone H3 trimethylated at 'Lys-9' (H3K9me3) as well as to histone H3 monomethylated at 'Lys-27' (H3K27ac) and trimethylated at 'Lys-27' (H3K27me3). Represses PDGFRA expression, thus playing a role in regulation of mesenchymal cell proliferation. Suppresses the expression of CDKN1A/p21 by reducing the level of trimethylation of histone H3 'Lys-4', leading to enhanced proliferation of germinal center B cells. This is PHD finger protein 14 (Phf14) from Mus musculus (Mouse).